The primary structure comprises 267 residues: Collectin-11 (267 aa).

The signal sequence occupies residues 1 to 21; it reads MKRALALMGLAFLCVLRAGAA. The interval 40-109 is disordered; sequence GDAGEKGDKG…GPNGEPGIPC (70 aa). 2 stretches are compositionally biased toward basic and acidic residues: residues 41-50 and 62-71; these read DAGEKGDKGA and EKGDVGDKGQ. The 60-residue stretch at 49 to 108 folds into the Collagen-like domain; that stretch reads GAPGRPGRVGPTGEKGDVGDKGQKGGVGRHGKIGPIGSKGEKGDSGDIGPPGPNGEPGIP. Residues 110–144 adopt a coiled-coil conformation; that stretch reads ECSQLRKAIGEMDNQVTQLTAELKFIKNAVAGVRE. Residues 145–261 enclose the C-type lectin domain; sequence TEQKMYLLVK…CHLTMHFLCE (117 aa). Intrachain disulfides connect C166–C260 and C238–C252. R196 is an a carbohydrate binding site. Residues D203, E207, E228, N230, N231, D234, E236, and D237 each coordinate Ca(2+). Residue E236 participates in a carbohydrate binding. A carbohydrate contacts are provided by residues E240 and 248-250; that span reads NDV. Ca(2+) is bound by residues N248 and D249.

The protein belongs to the COLEC10/COLEC11 family. Homotrimer; disulfide-linked. Interacts with MASP1; probably triggers the lectin pathway of complement.

The protein resides in the secreted. In terms of biological role, lectin that plays a role in innate immunity, apoptosis and embryogenesis. Calcium-dependent lectin that binds self and non-self glycoproteins presenting high mannose oligosaccharides with at least one terminal alpha-1,2-linked mannose epitope. Primarily recognizes the terminal disaccharide of the glycan. Also recognizes a subset of fucosylated glycans and lipopolysaccharides. Plays a role in innate immunity through its ability to bind non-self sugars presented by microorganisms and to activate the complement through the recruitment of MAPS1. Also plays a role in apoptosis through its ability to bind in a calcium-independent manner the DNA present at the surface of apoptotic cells and to activate the complement in response to this binding. Finally, plays a role in development, probably serving as a guidance cue during the migration of neural crest cells and other cell types during embryogenesis. This is Collectin-11 (COLEC11) from Bos taurus (Bovine).